We begin with the raw amino-acid sequence, 367 residues long: Peptide chain release factor 2 (367 aa).

N5-methylglutamine is present on Q249.

The protein belongs to the prokaryotic/mitochondrial release factor family. In terms of processing, methylated by PrmC. Methylation increases the termination efficiency of RF2.

The protein localises to the cytoplasm. Peptide chain release factor 2 directs the termination of translation in response to the peptide chain termination codons UGA and UAA. The chain is Peptide chain release factor 2 from Thermotoga petrophila (strain ATCC BAA-488 / DSM 13995 / JCM 10881 / RKU-1).